The sequence spans 263 residues: Type III pantothenate kinase (263 aa).

An ATP-binding site is contributed by 14–21; that stretch reads DIGNTSVN. 115-118 contributes to the substrate binding site; it reads GADR. Catalysis depends on aspartate 117, which acts as the Proton acceptor. Residue aspartate 137 participates in K(+) binding. Threonine 140 lines the ATP pocket. Threonine 192 contributes to the substrate binding site.

The protein belongs to the type III pantothenate kinase family. As to quaternary structure, homodimer. Requires NH4(+) as cofactor. The cofactor is K(+).

It localises to the cytoplasm. The enzyme catalyses (R)-pantothenate + ATP = (R)-4'-phosphopantothenate + ADP + H(+). The protein operates within cofactor biosynthesis; coenzyme A biosynthesis; CoA from (R)-pantothenate: step 1/5. Catalyzes the phosphorylation of pantothenate (Pan), the first step in CoA biosynthesis. The protein is Type III pantothenate kinase of Dehalococcoides mccartyi (strain CBDB1).